The sequence spans 292 residues: 2-(5''-triphosphoribosyl)-3'-dephosphocoenzyme-A synthase (292 aa).

This sequence belongs to the CitG/MdcB family.

The catalysed reaction is 3'-dephospho-CoA + ATP = 2'-(5''-triphospho-alpha-D-ribosyl)-3'-dephospho-CoA + adenine. Catalyzes the formation of 2-(5''-triphosphoribosyl)-3'-dephosphocoenzyme-A, the precursor of the prosthetic group of the holo-acyl carrier protein (gamma chain) of citrate lyase, from ATP and dephospho-CoA. The chain is 2-(5''-triphosphoribosyl)-3'-dephosphocoenzyme-A synthase from Escherichia coli (strain UTI89 / UPEC).